A 313-amino-acid chain; its full sequence is Antiviral protein I (313 aa).

An N-terminal signal peptide occupies residues 1–22 (MKSMLVVTISIWLILAPTSTWA). Cystine bridges form between cysteine 56-cysteine 281 and cysteine 107-cysteine 128. The active site involves tyrosine 94. Valine 95 provides a ligand contact to substrate. Residue serine 143 participates in substrate binding. Residue tyrosine 145 is part of the active site. Serine 197 is a binding site for substrate. Residues glutamate 198 and arginine 201 contribute to the active site. Arginine 201 serves as a coordination point for substrate. Positions 286–313 (NQNAMFPQLIMSTYYNYMVNLGDLFEGF) are excised as a propeptide.

It belongs to the ribosome-inactivating protein family. Type 1 RIP subfamily. Monomer. Expressed in spring leaves (at protein level). Expressed in roots (at protein level).

It carries out the reaction Endohydrolysis of the N-glycosidic bond at one specific adenosine on the 28S rRNA.. Functionally, possesses antiviral potency. Inhibits viral infection of plants (tobacco mosaic virus). Inhibits protein synthesis. Releases both adenine and guanine from Escherichia coli rRNA in vitro. Activity on guanine is 20 times slower than that on adenine. This is Antiviral protein I (PAP1) from Phytolacca americana (American pokeweed).